Here is a 551-residue protein sequence, read N- to C-terminus: Arginine--tRNA ligase (551 aa).

The 'HIGH' region motif lies at A123 to R133.

Belongs to the class-I aminoacyl-tRNA synthetase family. As to quaternary structure, monomer.

It is found in the cytoplasm. The catalysed reaction is tRNA(Arg) + L-arginine + ATP = L-arginyl-tRNA(Arg) + AMP + diphosphate. This is Arginine--tRNA ligase from Prosthecochloris aestuarii (strain DSM 271 / SK 413).